The sequence spans 470 residues: 1-aminocyclopropane-1-carboxylate synthase 9 (470 aa).

Residues Glu47 and Tyr85 each contribute to the substrate site. N6-(pyridoxal phosphate)lysine is present on Lys272.

The protein belongs to the class-I pyridoxal-phosphate-dependent aminotransferase family. In terms of assembly, homodimer and heterodimer. In vivo, the relevance of heterodimerization with other ACS enzymes is however unsure. Interacts (via its C-terminal region) with FEI1, FEI2, ETO1 and EOL1. Pyridoxal 5'-phosphate serves as cofactor. Post-translationally, may be processed at its C-terminus. In terms of tissue distribution, expressed in roots and siliques.

The catalysed reaction is S-adenosyl-L-methionine = 1-aminocyclopropane-1-carboxylate + S-methyl-5'-thioadenosine + H(+). The protein operates within alkene biosynthesis; ethylene biosynthesis via S-adenosyl-L-methionine; ethylene from S-adenosyl-L-methionine: step 1/2. In terms of biological role, 1-aminocyclopropane-1-carboxylate synthase (ACS) enzymes catalyze the conversion of S-adenosyl-L-methionine (SAM) into 1-aminocyclopropane-1-carboxylate (ACC), a direct precursor of ethylene. In Arabidopsis thaliana (Mouse-ear cress), this protein is 1-aminocyclopropane-1-carboxylate synthase 9 (ACS9).